Consider the following 435-residue polypeptide: UPF0597 protein AHA_4077 (435 aa).

It belongs to the UPF0597 family.

The polypeptide is UPF0597 protein AHA_4077 (Aeromonas hydrophila subsp. hydrophila (strain ATCC 7966 / DSM 30187 / BCRC 13018 / CCUG 14551 / JCM 1027 / KCTC 2358 / NCIMB 9240 / NCTC 8049)).